A 263-amino-acid chain; its full sequence is Probable ABC transporter permease protein slr1045 (263 aa).

The next 7 membrane-spanning stretches (helical) occupy residues 12–32 (LWFQRLVAAFFLTGQVFLHIL), 52–72 (SMAIALITAGFVGMVFTIQVA), 97–117 (APVLTAVVIAGRVGSAFAAEI), 140–162 (LVVPRVIACGLMLPILTGLSLFV), 167–186 (GLVISSSLYAINPTIFLNSV), 192–212 (LWDVFACLFKSLVFGVIIAII), and 234–254 (AVVTSLLAIFISNFFLSWLMF).

Belongs to the MlaE permease family.

It localises to the cell membrane. Functionally, could be part of an ABC transporter complex. The polypeptide is Probable ABC transporter permease protein slr1045 (Synechocystis sp. (strain ATCC 27184 / PCC 6803 / Kazusa)).